The chain runs to 164 residues: MNNSLDYLAYPVIVSNHRQSTTFRKKLDFGHYILHKNRVQIVKPAVDTKPPMAHTHYILKLSKIQGEQKRIDKIEYENRQLCQKIANAYRGPAKVDCWNEYLSKSLNRESRNRELVRITMENQGILRRLSDRKPNYDRRSSEMDWQNSRRYIRNTTRYLLFQED.

A coiled-coil region spans residues 61–88; that stretch reads LSKIQGEQKRIDKIEYENRQLCQKIANA.

The protein belongs to the CFAP97 family. As to expression, expressed exclusively in testis.

Functionally, required for male fertility through its role in axonemal doublet stabilization which is essential for sperm motility and fertilization. The protein is Sperm axonemal maintenance protein CFAP97D1 (Cfap97d1) of Mus musculus (Mouse).